The following is a 747-amino-acid chain: MGLSDIPANYMQQTGHNLQQQQLHHHHHHNHNHNHNAAAAAAAAAHVLAMENSELLMSPKDKMSSKKKMHLLKKIKKRFGLVRRSPSSCPGPNNLPPLQFHTVHGDNIRISRDGTLARRFESFCRAITFSARPVRINERICVKFAEISNNWNGGIRFGFTSNDPASLEGALPKYACPDLTNRPGFWAKALHEQYCEKDNILYYYVNNAGDVIYGINNEEKGVILSGIDTRGLLWTVIDIYGNCTGIEFLDARIYMYQQQQQQQQQQQQQLQQQQLPQQQLPQQQQQLPQQQLTAHHPLQQSRRSLPGGTGVVVDHELERHVMPSLQSLHLAGTAAGIIEHDLANGLPPLRYNANGRLIPVPFHITKGRNVRLSHDRFVASRTESDFCQGYVFTARPIRIGEKLIVQVLKTEQMYVGALALGLTSCNPALLQPNDLPNDSDFLLDRPEYWVVSKDIAAAPQRGDEIAFFVAPNGEVSISKNNGPAVVVMHVDQSLQLWAFLDVYGSTQSLRMFRQQLPNMVAYPSQPQINAAAAAAAAAASTTAASSRMLPMAESLNSLNAGQMLRSKMQLNVTQSSSTLASTAGNGSRMISMPSNGDILQIQPNGGGTVLVVNLPPRSSSHDLNGQLAGRQAASAATVTSSGILAGACSSGTLISTTSSQQYIEPVAQSTSTLNGTKWKDSLSDQQSTDSSAECTICYENPIDSVLYMCGHMCMCYDCAIEQWRGVGGGQCPLCRAVIRDVIRTYTT.

The NHR 1 domain maps to 97–251 (PLQFHTVHGD…NCTGIEFLDA (155 aa)). The span at 280 to 292 (LPQQQQQLPQQQL) shows a compositional bias: low complexity. Residues 280–309 (LPQQQQQLPQQQLTAHHPLQQSRRSLPGGT) form a disordered region. The NHR 2 domain maps to 359 to 514 (PVPFHITKGR…STQSLRMFRQ (156 aa)). The RING-type zinc finger occupies 694–735 (CTICYENPIDSVLYMCGHMCMCYDCAIEQWRGVGGGQCPLCR).

Its subcellular location is the nucleus. Its function is as follows. Involved in neurogenesis. Interacts with other neurogenic proteins in the specification of the neuroblast versus epidermoblast cell fate. This is Protein neuralized (neur) from Drosophila virilis (Fruit fly).